The following is a 487-amino-acid chain: Glutamyl-tRNA(Gln) amidotransferase subunit A (487 aa).

Catalysis depends on charge relay system residues K74 and S149. S173 serves as the catalytic Acyl-ester intermediate.

Belongs to the amidase family. GatA subfamily. In terms of assembly, heterotrimer of A, B and C subunits.

The catalysed reaction is L-glutamyl-tRNA(Gln) + L-glutamine + ATP + H2O = L-glutaminyl-tRNA(Gln) + L-glutamate + ADP + phosphate + H(+). Its function is as follows. Allows the formation of correctly charged Gln-tRNA(Gln) through the transamidation of misacylated Glu-tRNA(Gln) in organisms which lack glutaminyl-tRNA synthetase. The reaction takes place in the presence of glutamine and ATP through an activated gamma-phospho-Glu-tRNA(Gln). In Prochlorococcus marinus (strain MIT 9211), this protein is Glutamyl-tRNA(Gln) amidotransferase subunit A.